Here is a 242-residue protein sequence, read N- to C-terminus: Probable transcriptional regulatory protein LSL_0422 (242 aa).

The segment at 1–21 is disordered; that stretch reads MSGHSKWHNIQGRKNAQDAKR.

This sequence belongs to the TACO1 family.

The protein resides in the cytoplasm. This is Probable transcriptional regulatory protein LSL_0422 from Ligilactobacillus salivarius (strain UCC118) (Lactobacillus salivarius).